The following is a 156-amino-acid chain: Small ribosomal subunit protein uS7 (156 aa).

This sequence belongs to the universal ribosomal protein uS7 family. Part of the 30S ribosomal subunit. Contacts proteins S9 and S11.

Its function is as follows. One of the primary rRNA binding proteins, it binds directly to 16S rRNA where it nucleates assembly of the head domain of the 30S subunit. Is located at the subunit interface close to the decoding center, probably blocks exit of the E-site tRNA. This chain is Small ribosomal subunit protein uS7, found in Nitrobacter hamburgensis (strain DSM 10229 / NCIMB 13809 / X14).